The chain runs to 157 residues: Small ribosomal subunit protein uS7 (157 aa).

The protein belongs to the universal ribosomal protein uS7 family. As to quaternary structure, part of the 30S ribosomal subunit. Contacts proteins S9 and S11.

In terms of biological role, one of the primary rRNA binding proteins, it binds directly to 16S rRNA where it nucleates assembly of the head domain of the 30S subunit. Is located at the subunit interface close to the decoding center, probably blocks exit of the E-site tRNA. The protein is Small ribosomal subunit protein uS7 of Francisella tularensis subsp. holarctica (strain OSU18).